We begin with the raw amino-acid sequence, 151 residues long: Putative pre-16S rRNA nuclease (151 aa).

Belongs to the YqgF nuclease family.

The protein localises to the cytoplasm. In terms of biological role, could be a nuclease involved in processing of the 5'-end of pre-16S rRNA. In Nostoc sp. (strain PCC 7120 / SAG 25.82 / UTEX 2576), this protein is Putative pre-16S rRNA nuclease.